Consider the following 920-residue polypeptide: Protein FAN (920 aa).

The GRAM domain occupies 176 to 247 (RLARTSFDKN…QDVRRIYKRR (72 aa)). A BEACH-type PH domain is found at 189 to 286 (SVSEKLHMEC…DRDDLYFYIA (98 aa)). Residues 290-575 (EHHAAEHTAE…QLFVTPHPRR (286 aa)) enclose the BEACH domain. WD repeat units lie at residues 631–661 (IHKE…KMFS), 673–703 (FSNM…YFYS), 715–743 (GHDD…KVWS), 764–794 (EHDV…NIWD), 806–836 (CHSG…NVID), and 887–917 (GHTG…MFWK).

In terms of biological role, couples the p55 TNF-receptor (TNF-R55 / TNFR1) to neutral sphingomyelinase (N-SMASE). Specifically binds to the N-smase activation domain of TNF-R55. May regulate ceramide production by N-SMASE. This chain is Protein FAN (Nsmaf), found in Mus musculus (Mouse).